Reading from the N-terminus, the 191-residue chain is Large ribosomal subunit protein bL9 (191 aa).

Residues 151–191 (AERQAKGESLTSADAIYGVDEDALKPEDFFNPEAEIESEEE) are disordered.

It belongs to the bacterial ribosomal protein bL9 family.

In terms of biological role, binds to the 23S rRNA. The chain is Large ribosomal subunit protein bL9 from Sinorhizobium medicae (strain WSM419) (Ensifer medicae).